Here is a 503-residue protein sequence, read N- to C-terminus: MSAALRFDNIGKVFPGVRALDGISFDVHAGEVHGLMGENGAGKSTLLKILGGEYQPDAGSVLVDGQPVHFSSAAASIAAGIAVIHQELQYVPDLTVAENLLLGRLPNALGWVKKGEAKRHVRERLTAMGVDLDPDAKLGRLSIAQRQMVEICKALMRNARVIALDEPTSSLSHRETEVLFKLVDDLRAQGRALIYISHRMDEIYRLCDACTIFRDGRKIASHESLADVPREQLVAEMVGREISDIYHYAPRALGDVRFSAEGVDGPALREPASFSVRAGEIVGFFGLVGAGRSELMRLVYGADRRRAGELTLDGKRIDVKRTGDAIRHGIVLCPEDRKEEGIIAMASVAENINISCRRHSLRAGLFIDRKTEIETADRFIQRLKIKTPNRRQKIRFLSGGNQQKAILSRWLAEPDLKVVILDEPTRGIDVGAKHEIYDVIYRLAERGCAIVMVSSELPEVLGVSDRIVVMREGRIAGELARAQANEHAVLSLALPQTSVAEAA.

ABC transporter domains are found at residues 5–240 and 251–497; these read LRFD…MVGR and RALG…LPQT. 37–44 is a binding site for ATP; that stretch reads GENGAGKS.

Belongs to the ABC transporter superfamily. Arabinose importer (TC 3.A.1.2.2) family. As to quaternary structure, the complex is composed of two ATP-binding proteins (AraG), two transmembrane proteins (AraH) and a solute-binding protein (AraF).

It is found in the cell inner membrane. The enzyme catalyses L-arabinose(out) + ATP + H2O = L-arabinose(in) + ADP + phosphate + H(+). Functionally, part of the ABC transporter complex AraFGH involved in arabinose import. Responsible for energy coupling to the transport system. The chain is Arabinose import ATP-binding protein AraG 1 from Burkholderia ambifaria (strain ATCC BAA-244 / DSM 16087 / CCUG 44356 / LMG 19182 / AMMD) (Burkholderia cepacia (strain AMMD)).